The primary structure comprises 496 residues: Lysine--tRNA ligase (496 aa).

Mg(2+) is bound by residues E407 and E414.

Belongs to the class-II aminoacyl-tRNA synthetase family. Homodimer. Mg(2+) serves as cofactor.

The protein localises to the cytoplasm. The catalysed reaction is tRNA(Lys) + L-lysine + ATP = L-lysyl-tRNA(Lys) + AMP + diphosphate. The polypeptide is Lysine--tRNA ligase (Staphylococcus haemolyticus (strain JCSC1435)).